The primary structure comprises 406 residues: HEAT repeat-containing taxis protein OE_2401F (406 aa).

HEAT repeat units lie at residues 7–41 (LERSGDVEKLVELLQESEKETVRRRAAEILGNLDE), 42–78 (PEPEGIQALVDAMSDDDESVRAAAIDALTQQEAVDAL), 90–127 (GATWAQAEAFVENLESETPELRMAAANVLGLLGVEDTA), 153–184 (IEQPAVTGILVDCLHGEPLKVRREAAESLGRL), 185–215 (TTEQALDGLLSVVEDDSEAMRRTAVSSLGRF), 216–252 (ETAEPVDALVERLGDESDLVRRAAVFSLIEILSNVPP), and 370–406 (VGGDRSRQRLERLVDETDSEEVRRRAFSAISKLGGKT).

Interacts with chemotaxis (Che) proteins.

In terms of biological role, involved in taxis signal transduction. Essential for the ability to control the direction of flagellar rotation. May have a role between CheY and the flagellum. The polypeptide is HEAT repeat-containing taxis protein OE_2401F (Halobacterium salinarum (strain ATCC 29341 / DSM 671 / R1)).